The following is a 401-amino-acid chain: Probable 2,3-bisphosphoglycerate-independent phosphoglycerate mutase (401 aa).

It belongs to the BPG-independent phosphoglycerate mutase family. A-PGAM subfamily.

It carries out the reaction (2R)-2-phosphoglycerate = (2R)-3-phosphoglycerate. It participates in carbohydrate degradation; glycolysis; pyruvate from D-glyceraldehyde 3-phosphate: step 3/5. Functionally, catalyzes the interconversion of 2-phosphoglycerate and 3-phosphoglycerate. The chain is Probable 2,3-bisphosphoglycerate-independent phosphoglycerate mutase from Thermotoga neapolitana (strain ATCC 49049 / DSM 4359 / NBRC 107923 / NS-E).